Reading from the N-terminus, the 451-residue chain is GTPase Der (451 aa).

EngA-type G domains are found at residues 5 to 170 and 186 to 359; these read PVVA…VAPP and IKLA…AAAF. GTP contacts are provided by residues 11 to 18, 58 to 62, 122 to 125, 192 to 199, 239 to 243, and 304 to 307; these read GRPNVGKS, DTGGF, NKAE, DTAGL, and NKWD. Residues 360-444 enclose the KH-like domain; it reads AKLSTPRLTR…PLRIEFKSSR (85 aa).

Belongs to the TRAFAC class TrmE-Era-EngA-EngB-Septin-like GTPase superfamily. EngA (Der) GTPase family. In terms of assembly, associates with the 50S ribosomal subunit.

In terms of biological role, GTPase that plays an essential role in the late steps of ribosome biogenesis. This is GTPase Der from Bordetella bronchiseptica (strain ATCC BAA-588 / NCTC 13252 / RB50) (Alcaligenes bronchisepticus).